The sequence spans 667 residues: UvrABC system protein B (667 aa).

The 384-residue stretch at 31 to 414 folds into the Helicase ATP-binding domain; it reads AGIESGEKEQ…EMDRTKHVVQ (384 aa). An ATP-binding site is contributed by 44-51; the sequence is GATGTGKT. Residues 97–120 carry the Beta-hairpin motif; it reads YYDYYQPEAYVPSSDTYIEKDSAI. Residues 435–597 form the Helicase C-terminal domain; it reads QIDDLVGEIN…ITPHTIKKAI (163 aa). Positions 630-665 constitute a UVR domain; the sequence is LDMISKLEEQMKTAAKKLDFEQAATLRDTVMELKAQ.

It belongs to the UvrB family. Forms a heterotetramer with UvrA during the search for lesions. Interacts with UvrC in an incision complex.

The protein resides in the cytoplasm. The UvrABC repair system catalyzes the recognition and processing of DNA lesions. A damage recognition complex composed of 2 UvrA and 2 UvrB subunits scans DNA for abnormalities. Upon binding of the UvrA(2)B(2) complex to a putative damaged site, the DNA wraps around one UvrB monomer. DNA wrap is dependent on ATP binding by UvrB and probably causes local melting of the DNA helix, facilitating insertion of UvrB beta-hairpin between the DNA strands. Then UvrB probes one DNA strand for the presence of a lesion. If a lesion is found the UvrA subunits dissociate and the UvrB-DNA preincision complex is formed. This complex is subsequently bound by UvrC and the second UvrB is released. If no lesion is found, the DNA wraps around the other UvrB subunit that will check the other stand for damage. The chain is UvrABC system protein B from Lactiplantibacillus plantarum (strain ATCC BAA-793 / NCIMB 8826 / WCFS1) (Lactobacillus plantarum).